Reading from the N-terminus, the 480-residue chain is Lysosomal protective protein (480 aa).

The signal sequence occupies residues 1 to 28 (MIRAAPPPLFLLLLLLLLLVSWASRGEA). Intrachain disulfides connect Cys-88/Cys-362, Cys-240/Cys-256, Cys-241/Cys-246, and Cys-281/Cys-331. An N-linked (GlcNAc...) asparagine glycan is attached at Asn-145. Ser-178 is an active-site residue. Asn-333 carries N-linked (GlcNAc...) asparagine glycosylation. Active-site residues include Asp-400 and His-457.

It belongs to the peptidase S10 family. In terms of assembly, heterodimer of a 32 kDa chain and a 20 kDa chain; disulfide-linked.

The protein localises to the lysosome. It carries out the reaction Release of a C-terminal amino acid with broad specificity.. Protective protein appears to be essential for both the activity of beta-galactosidase and neuraminidase, it associates with these enzymes and exerts a protective function necessary for their stability and activity. This protein is also a carboxypeptidase and can deamidate tachykinins. The polypeptide is Lysosomal protective protein (CTSA) (Homo sapiens (Human)).